We begin with the raw amino-acid sequence, 299 residues long: Acetaldehyde dehydrogenase 1 (299 aa).

Cysteine 130 acts as the Acyl-thioester intermediate in catalysis. Residues 161-169 and asparagine 272 each bind NAD(+); that span reads SVGPGTRKN.

It belongs to the acetaldehyde dehydrogenase family.

The enzyme catalyses acetaldehyde + NAD(+) + CoA = acetyl-CoA + NADH + H(+). The protein is Acetaldehyde dehydrogenase 1 (mhpF) of Burkholderia cenocepacia (strain ATCC BAA-245 / DSM 16553 / LMG 16656 / NCTC 13227 / J2315 / CF5610) (Burkholderia cepacia (strain J2315)).